The chain runs to 290 residues: F-box protein PP2-A13 (290 aa).

One can recognise an F-box domain in the interval 21–67 (RKLRLVDLPENCVALIMTRLDPPEICRLARLNRMFRRASSADFIWES).

Part of a SCF (ASK-cullin-F-box) protein ligase complex. Interacts with SKP1A/ASK1, SKP1B/ASK2, ASK5, ASK11 and ASK13.

The protein resides in the nucleus. It participates in protein modification; protein ubiquitination. In terms of biological role, component of SCF(ASK-cullin-F-box) E3 ubiquitin ligase complexes, which may mediate the ubiquitination and subsequent proteasomal degradation of target proteins. The chain is F-box protein PP2-A13 (PP2A13) from Arabidopsis thaliana (Mouse-ear cress).